We begin with the raw amino-acid sequence, 389 residues long: MASNLPLQLPAGVSDLLPPEAAALRQLEQRLLNCFRSWGYQEVMTPTFEFATTFQAGSPAGEEGALYKFIDRQGRVLALRPEMTAPIARLVATSLRRRELPLRLGYSARVFRYEEPQAGRRREFHQAGVELIGAGGVAGDVEIIALAVESLAQAGLEDFRLGLGQVAVTKGVLQDLALPPEAVAGIKSALASKDLVALERIYDEYHLEGERRRRLELLATIHGGREALEEARACFGRTAAAASLAELSRVWEALGAAGLEKWLFIDLGILRDFDYYTGIVFEGYVPGLGAPVCGGGRYDGLLAQFGYPCPATGFALGLERLLLARGETAPASLAGGYLVAGRDLAALLKRARELRSKGTAVVLDGESRSRQEAAARAAARGLNLEWIGE.

Belongs to the class-II aminoacyl-tRNA synthetase family. HisZ subfamily. In terms of assembly, heteromultimer composed of HisG and HisZ subunits.

Its subcellular location is the cytoplasm. Its pathway is amino-acid biosynthesis; L-histidine biosynthesis; L-histidine from 5-phospho-alpha-D-ribose 1-diphosphate: step 1/9. Required for the first step of histidine biosynthesis. May allow the feedback regulation of ATP phosphoribosyltransferase activity by histidine. The chain is ATP phosphoribosyltransferase regulatory subunit from Moorella thermoacetica (strain ATCC 39073 / JCM 9320).